A 494-amino-acid polypeptide reads, in one-letter code: MKNIAFDSNKYLSLQRNHILERIKQFDGKLYMEFGGKILEDFHAARVLPGYEPDNKIKLLKELKDQVEIVITINANNIEHSKTRGDLGISYDQEVLRLIDTFNALDIYVGSVVITQYNHQAAADHFQKQLAKNGITSYRHYPIKGYPTDINHIISPDGMGRNDYIKTSRNLIVVTAPGPGSGKLATCISQLYHDQLKGVTSGYAKFETFPVWNLPLHHPVNLAYEAATADLDDVNMIDPFHLEAYGKTAVNYNRDIEVFPVLNRTFERILSQSPYASPTDMGVNMVGFSIVNEEAAIEASRQEIIRRYYQTLVDFKAERVTEAAVKKLELLMNDIGVTPKDRQVTLIARQKAEITGQPALALQLPNGQVVTGKTSDLFGPTAAVIINAIKTLAHISKETHLIEPEYVKPIQGLKINHLGSHNPRLHANEILMALAITAMNNNQADLAMKELGNLKGSEAHSTVILTNEDKHVLRQLGINVTFDPVYQHHKLYRS.

Belongs to the UPF0371 family.

The protein is UPF0371 protein SEQ_1471 of Streptococcus equi subsp. equi (strain 4047).